The following is a 669-amino-acid chain: MDFPGAARLLSLLLVPLLLGPARGLRNASQRTFKIDYGHNRFLKDGQPFRYISGSIHYFRVPRFYWKDRLLKMKMAGLNAIQTYVPWNFHEPQPGQYQFSGEHDVEYFLKLAHELGLLVILRPGPYICAEWDMGGLPAWLLLKESIILRSSDPDYLAAVDKWLGVLLPKMKPLLYQNGGPIITVQVENEYGSYFTCDYDYLRFLQRRFRDHLGGDVLLFTTDGAHEKFLQCGALQGIYATVDFGPDANITAAFQIQRKSEPRGPLVNSEFYTGWLDHWGQPHSRVRTEVVASSLHDVLAHGANVNLYMFIGGTNFAYWNGANIPYQPQPTSYDYDAPLSEAGDLTDKYFALRDVIRKFEKVPEGFIPPSTPKFAYGKVALQKLKTVEDALNVLCPAGPIKSLYPLTFIQVKQYFGFVLYRTTLPQDCSNPTPLSSPLNGVRDRAYVAVDGVPQGVLERSYVITLNITGQAGATLDLLVENMGRVNYGRYINDFKGLISNLTLGSSVLTDWMIFPLDTEDAVRSHLGGWHGRNHGRQDNKAFAHHSSNYTLPAFYAGNFSIPSGIPDLPQDTFIQFSGWTKGQVWINGFNLGRYWPGRGPQVTLFVPRHILVTSAPNTIMVLELERAPCDDNGPELCTVEFVDRPLISATPTSSHPLPDLSDRDSGWDRV.

Residues 1 to 24 (MDFPGAARLLSLLLVPLLLGPARG) form the signal peptide. Positions 25-29 (LRNAS) are excised as a propeptide. N-linked (GlcNAc...) asparagine glycosylation occurs at Asn27. Residues Tyr84, Glu130, and Asn188 each contribute to the substrate site. Catalysis depends on Glu189, which acts as the Proton donor. An intrachain disulfide couples Cys196 to Cys231. N-linked (GlcNAc...) asparagine glycosylation is present at Asn248. The active-site Nucleophile is Glu269. Tyr334 serves as a coordination point for substrate. N-linked (GlcNAc...) asparagine glycosylation is found at Asn465, Asn499, Asn547, and Asn557. Cys628 and Cys636 form a disulfide bridge. The disordered stretch occupies residues 649–669 (TPTSSHPLPDLSDRDSGWDRV). The segment covering 659-669 (LSDRDSGWDRV) has biased composition (basic and acidic residues).

The protein belongs to the glycosyl hydrolase 35 family. In terms of assembly, homodimer. May form higher multimers.

Its subcellular location is the lysosome. The catalysed reaction is Hydrolysis of terminal non-reducing beta-D-galactose residues in beta-D-galactosides.. In terms of biological role, cleaves beta-linked terminal galactosyl residues from gangliosides, glycoproteins, and glycosaminoglycans. This chain is Beta-galactosidase (GLB1), found in Felis catus (Cat).